A 265-amino-acid polypeptide reads, in one-letter code: UPF0354 protein GWCH70_2742 (265 aa).

Belongs to the UPF0354 family.

This chain is UPF0354 protein GWCH70_2742, found in Geobacillus sp. (strain WCH70).